A 663-amino-acid chain; its full sequence is A-type ATP synthase subunit I (663 aa).

A run of 7 helical transmembrane segments spans residues 376-396 (FFFG…IVAA), 412-432 (FAYI…LFGS), 468-488 (LAAL…GFVI), 497-517 (GAVF…LLAS), 534-554 (IALF…LMII), 568-588 (ARLM…NVLV), and 589-609 (GMVW…IIFF).

This sequence belongs to the V-ATPase 116 kDa subunit family. Has multiple subunits with at least A(3), B(3), C, D, E, F, H, I and proteolipid K(x).

It localises to the cell membrane. Component of the A-type ATP synthase that produces ATP from ADP in the presence of a proton gradient across the membrane. The polypeptide is A-type ATP synthase subunit I (Thermococcus kodakarensis (strain ATCC BAA-918 / JCM 12380 / KOD1) (Pyrococcus kodakaraensis (strain KOD1))).